The primary structure comprises 317 residues: Hairy/enhancer-of-split related with YRPW motif protein 1 (317 aa).

The interval 1–59 (MKRNHDFSSSDSELDENIEVEKESADENAGANSPLGSMSPSTTSQVQARKRRRGIIEKR) is disordered. Residues 30 to 47 (GANSPLGSMSPSTTSQVQ) are compositionally biased toward polar residues. A bHLH domain is found at 48 to 103 (ARKRRRGIIEKRRRDRINNSLSELRRLVPSAFEKQGSAKLEKAEILQMTVDHLKML). Residues 121-157 (YRGLGFRECLAETARYLSIIEGLDNTDPLRIRLVSHL) form the Orange domain. Low complexity-rich tracts occupy residues 193-226 (QQQQ…SAPS) and 248-264 (PPST…TASK). The interval 193–264 (QQQQQQGAPL…PGLTPPTASK (72 aa)) is disordered. Residues 307–310 (YRPW) carry the YRPW motif motif.

This sequence belongs to the HEY family.

It is found in the nucleus. Transcriptional repressor which functions as a downstream effector of Notch signaling. In Danio rerio (Zebrafish), this protein is Hairy/enhancer-of-split related with YRPW motif protein 1 (hey1).